A 106-amino-acid polypeptide reads, in one-letter code: uncharacterized protein (106 aa).

The first 27 residues, 1–27 (MHHFVPSISLFMASVSFSVFFSHLATS), serve as a signal peptide directing secretion. The helical transmembrane segment at 42–62 (TLFSMVPLINSSFNLSVFLFF) threads the bilayer.

Its subcellular location is the membrane. This is an uncharacterized protein from Saccharomyces cerevisiae (strain ATCC 204508 / S288c) (Baker's yeast).